The following is a 715-amino-acid chain: Bromodomain-containing protein DDB_G0278469 (715 aa).

Disordered regions lie at residues 18 to 46 (EDNN…NRNA) and 186 to 425 (QQQK…ETKQ). Composition is skewed to low complexity over residues 20-45 (NNNN…PNRN), 186-204 (QQQK…PTAQ), 215-227 (LTAA…TTTT), 234-254 (TAPP…TTKK), and 261-281 (SKSN…TTIT). Over residues 307 to 316 (KPKEQKKDIM) the composition is skewed to basic and acidic residues. Positions 322–368 (SKKANTHEEKEEGESEEEEEEEEEEEEEEEEEEEEEQLEDKQKQTKT) form a coiled coil. A compositionally biased stretch (acidic residues) spans 332–359 (EEGESEEEEEEEEEEEEEEEEEEEEEQL). Residues 366-389 (TKTPISQNKSASSNIKPLSKTSKS) are compositionally biased toward polar residues. Positions 405 to 414 (KKITSTTVTR) are enriched in low complexity. Residues 437 to 470 (KQQTQEEIEQELKLESIRKRIEQFINKFEKEIND) are a coiled coil. The 126-residue stretch at 474-599 (KDLDEGKRKI…IQFYKSLLET (126 aa)) folds into the Bromo domain. A disordered region spans residues 653–715 (LVDEDEDECL…SEEEDQEATN (63 aa)). Polar residues predominate over residues 662-672 (LNNQNNPTTYD). The span at 684 to 715 (QESDEESDEESDEESDEERDQLSEEEDQEATN) shows a compositional bias: acidic residues.

The chain is Bromodomain-containing protein DDB_G0278469 from Dictyostelium discoideum (Social amoeba).